Reading from the N-terminus, the 45-residue chain is C-phycocyanin beta subunit (45 aa).

It belongs to the phycobiliprotein family. Heterodimer of an alpha and a beta subunit. The hererodimer further assembles into trimers and the trimers into hexamers. Post-translationally, contains two covalently linked bilin chromophores.

The protein localises to the cellular thylakoid membrane. Its function is as follows. Light-harvesting photosynthetic bile pigment-protein from the phycobiliprotein complex (phycobilisome, PBS). Phycocyanin is the major phycobiliprotein in the PBS rod. This chain is C-phycocyanin beta subunit (cpcB), found in Limnospira fusiformis (Arthrospira fusiformis).